A 403-amino-acid chain; its full sequence is Phosphopentomutase (403 aa).

6 residues coordinate Mn(2+): Asp-13, Asp-298, His-303, Asp-339, His-340, and His-351.

The protein belongs to the phosphopentomutase family. Mn(2+) serves as cofactor.

The protein localises to the cytoplasm. The catalysed reaction is 2-deoxy-alpha-D-ribose 1-phosphate = 2-deoxy-D-ribose 5-phosphate. It catalyses the reaction alpha-D-ribose 1-phosphate = D-ribose 5-phosphate. The protein operates within carbohydrate degradation; 2-deoxy-D-ribose 1-phosphate degradation; D-glyceraldehyde 3-phosphate and acetaldehyde from 2-deoxy-alpha-D-ribose 1-phosphate: step 1/2. Functionally, isomerase that catalyzes the conversion of deoxy-ribose 1-phosphate (dRib-1-P) and ribose 1-phosphate (Rib-1-P) to deoxy-ribose 5-phosphate (dRib-5-P) and ribose 5-phosphate (Rib-5-P), respectively. This Streptococcus pneumoniae (strain JJA) protein is Phosphopentomutase.